We begin with the raw amino-acid sequence, 200 residues long: Phospholipase A2 inhibitor CgMIP-I (200 aa).

An N-terminal signal peptide occupies residues Met1–Ser19. 7 cysteine pairs are disulfide-bonded: Cys22-Cys46, Cys25-Cys32, Cys39-Cys67, Cys73-Cys94, Cys95-Cys100, Cys118-Cys143, and Cys136-Cys165. N-linked (GlcNAc...) asparagine glycosylation is present at Asn176.

The protein belongs to the CNF-like-inhibitor family. As to quaternary structure, homomer of 110 kDa composed of 20-25-kDa subunits. In terms of processing, N-glycosylated. The glycosidic chain may contain superficial sialic acid residues. In terms of tissue distribution, expressed by the liver.

The protein resides in the secreted. In terms of biological role, inhibits the enzymatic activity of basic phospholipase A2. Specifically neutralizes PLA2, myotoxic, edema-forming, cytolytic, and anti-coagulant activities, as well as intracerebral lethal effect of the basic myotoxin I from the same venom (AC P0DQP6), crotoxin heterodimer and crotoxin subunit B alone. Does not block the enzymatic activity of crude acidic PLA2 fractions from the same venom. This is Phospholipase A2 inhibitor CgMIP-I from Cerrophidion godmani (Porthidium godmani).